Reading from the N-terminus, the 309-residue chain is Protein FdhE (309 aa).

Belongs to the FdhE family.

It is found in the cytoplasm. Necessary for formate dehydrogenase activity. This is Protein FdhE from Salmonella dublin (strain CT_02021853).